The following is a 697-amino-acid chain: Elongation factor G (697 aa).

The 283-residue stretch at 8–290 (ERYRNFGIMA…AVVDYLPSPL (283 aa)) folds into the tr-type G domain. GTP-binding positions include 17-24 (AHIDAGKT), 88-92 (DTPGH), and 142-145 (NKLD).

The protein belongs to the TRAFAC class translation factor GTPase superfamily. Classic translation factor GTPase family. EF-G/EF-2 subfamily.

The protein resides in the cytoplasm. Functionally, catalyzes the GTP-dependent ribosomal translocation step during translation elongation. During this step, the ribosome changes from the pre-translocational (PRE) to the post-translocational (POST) state as the newly formed A-site-bound peptidyl-tRNA and P-site-bound deacylated tRNA move to the P and E sites, respectively. Catalyzes the coordinated movement of the two tRNA molecules, the mRNA and conformational changes in the ribosome. The sequence is that of Elongation factor G from Sphingopyxis alaskensis (strain DSM 13593 / LMG 18877 / RB2256) (Sphingomonas alaskensis).